Consider the following 398-residue polypeptide: Sphingosine 1-phosphate receptor 5 (398 aa).

The Extracellular portion of the chain corresponds to 1–40 (MESGLLRPAPVSEVIVLHYNYTGKLRGARYQPGAGLRADA). An N-linked (GlcNAc...) asparagine glycan is attached at Asn20. A helical membrane pass occupies residues 41 to 61 (VVCLAVCAFIVLENLAVLLVL). The Cytoplasmic segment spans residues 62–70 (GRHPRFHAP). A helical membrane pass occupies residues 71-91 (MFLLLGSLTLSDLLAGAAYAA). At 92–111 (NILLSGPLTLKLSPALWFAR) the chain is on the extracellular side. The helical transmembrane segment at 112–132 (EGGVFVALTASVLSLLAIALE) threads the bilayer. The Cytoplasmic portion of the chain corresponds to 133–151 (RSLTMARRGPAPVSSRGRT). Residues 152 to 172 (LAMAAAAWGVSLLLGLLPALG) form a helical membrane-spanning segment. The Extracellular segment spans residues 173-192 (WNCLGRLDACSTVLPLYAKA). The chain crosses the membrane as a helical span at residues 193–213 (YVLFCVLAFVGILAAICALYA). Residues 214 to 252 (RIYCQVRANARRLPARPGTAGTTSTRARRKPRSLALLRT) are Cytoplasmic-facing. A helical transmembrane segment spans residues 253 to 273 (LSVVLLAFVACWGPLFLLLLL). Residues 274–287 (DVACPARTCPVLLQ) are Extracellular-facing. A helical membrane pass occupies residues 288-308 (ADPFLGLAMANSLLNPIIYTL). Topologically, residues 309–398 (TNRDLRHALL…RTLVSEPAAD (90 aa)) are cytoplasmic. Cys323 carries S-palmitoyl cysteine lipidation. The disordered stretch occupies residues 329–398 (GRDPSGSQQS…RTLVSEPAAD (70 aa)). Residues 333–347 (SGSQQSASAAEASGG) are compositionally biased toward low complexity. Ser381 carries the phosphoserine modification.

This sequence belongs to the G-protein coupled receptor 1 family. As to expression, widely expressed in the brain, most prominently in the corpus callosum, which is predominantly white matter. Detected in spleen, peripheral blood leukocytes, placenta, lung, aorta and fetal spleen. Low-level signal detected in many tissue extracts. Overexpressed in leukemic large granular lymphocytes. Isoform 1 is predominantly expressed in peripheral tissues. Isoform 2 is expressed in brain, spleen and peripheral blood leukocytes.

The protein localises to the cell membrane. In terms of biological role, receptor for the lysosphingolipid sphingosine 1-phosphate (S1P). S1P is a bioactive lysophospholipid that elicits diverse physiological effect on most types of cells and tissues. Is coupled to both the G(i/0)alpha and G(12) subclass of heteromeric G-proteins. May play a regulatory role in the transformation of radial glial cells into astrocytes and may affect proliferative activity of these cells. The sequence is that of Sphingosine 1-phosphate receptor 5 (S1PR5) from Homo sapiens (Human).